The chain runs to 361 residues: Biotin synthase (361 aa).

The region spanning 47–278 (VHGDEVALCG…AAHIFVMGGR (232 aa)) is the Radical SAM core domain. Residues Cys65, Cys69, and Cys72 each contribute to the [4Fe-4S] cluster site. The [2Fe-2S] cluster site is built by Ser110, Cys143, and Cys203. The interval 323 to 361 (TLRPPDTGKPWAFDGHAPSDADWNRKAAEPRPRPLPVVR) is disordered. Over residues 339 to 354 (APSDADWNRKAAEPRP) the composition is skewed to basic and acidic residues.

Belongs to the radical SAM superfamily. Biotin synthase family. As to quaternary structure, homodimer. [4Fe-4S] cluster is required as a cofactor. Requires [2Fe-2S] cluster as cofactor.

It catalyses the reaction (4R,5S)-dethiobiotin + (sulfur carrier)-SH + 2 reduced [2Fe-2S]-[ferredoxin] + 2 S-adenosyl-L-methionine = (sulfur carrier)-H + biotin + 2 5'-deoxyadenosine + 2 L-methionine + 2 oxidized [2Fe-2S]-[ferredoxin]. The protein operates within cofactor biosynthesis; biotin biosynthesis; biotin from 7,8-diaminononanoate: step 2/2. In terms of biological role, catalyzes the conversion of dethiobiotin (DTB) to biotin by the insertion of a sulfur atom into dethiobiotin via a radical-based mechanism. This chain is Biotin synthase, found in Anaeromyxobacter sp. (strain K).